The following is a 303-amino-acid chain: UDP-3-O-acyl-N-acetylglucosamine deacetylase (303 aa).

Positions 78, 237, and 241 each coordinate Zn(2+). His-264 functions as the Proton donor in the catalytic mechanism.

This sequence belongs to the LpxC family. The cofactor is Zn(2+).

It carries out the reaction a UDP-3-O-[(3R)-3-hydroxyacyl]-N-acetyl-alpha-D-glucosamine + H2O = a UDP-3-O-[(3R)-3-hydroxyacyl]-alpha-D-glucosamine + acetate. It participates in glycolipid biosynthesis; lipid IV(A) biosynthesis; lipid IV(A) from (3R)-3-hydroxytetradecanoyl-[acyl-carrier-protein] and UDP-N-acetyl-alpha-D-glucosamine: step 2/6. Catalyzes the hydrolysis of UDP-3-O-myristoyl-N-acetylglucosamine to form UDP-3-O-myristoylglucosamine and acetate, the committed step in lipid A biosynthesis. The chain is UDP-3-O-acyl-N-acetylglucosamine deacetylase from Teredinibacter turnerae (strain ATCC 39867 / T7901).